The chain runs to 228 residues: Growth arrest-specific protein 1 homolog (228 aa).

Residues 1-17 form the signal peptide; that stretch reads MRRVILPLVMTVTLCLA. N-linked (GlcNAc...) asparagine glycosylation is found at asparagine 143 and asparagine 156. Residue aspartate 205 is the site of GPI-anchor amidated aspartate attachment. Positions 206–228 are cleaved as a propeptide — removed in mature form; sequence SSVGHGFNILSAISVYLLTVLVF.

As to expression, pharynx muscle cells from its early formation, in the two-fold embryo, until the adult stage.

The protein resides in the cell membrane. Its function is as follows. Role in pharynx function or development. This is Growth arrest-specific protein 1 homolog (phg-1) from Caenorhabditis elegans.